Reading from the N-terminus, the 418-residue chain is MDKIVIRGGKKLKGEIVVSGSKNSALPILFATLLTDDPVMITNVPSLTDIDTAIAFLNFIGKKTVKEGNTVKAYSSYKYKHIAPYDLVRKMRASILIMGPLLVRLKRIEVSLPGGCAIGARPVDIHLAAFKKLGAKISVKGGYVKTSAKNGLKGATISFRVPSVGATENILLTAVLAKGKTIIKNAAREPEIEDLANVLTKMGAKVMGAGTKNIEIEGVDKLHGFMHEVIPDRIEAATYLIAAAITKGGVILKKVIPQHLKSVNDKLKKCGLCIKETKNTISAEWVKNLKPQNVKTEAYPGFPTDVQAQWMSLMCLLNGESCIEENVFENRFLHVSELQRFGADITVNGKTVNIKGVKEFSGAPVMVSDLRAGAALVLAGLAAKGKTVVSRIYHLNRGYDMLEKKLKKLGADIRIIHN.

A phosphoenolpyruvate-binding site is contributed by 22-23 (KN). Arg92 serves as a coordination point for UDP-N-acetyl-alpha-D-glucosamine. Cys116 acts as the Proton donor in catalysis. 2-(S-cysteinyl)pyruvic acid O-phosphothioketal is present on Cys116. UDP-N-acetyl-alpha-D-glucosamine contacts are provided by Asp305 and Val327.

It belongs to the EPSP synthase family. MurA subfamily.

The protein resides in the cytoplasm. It catalyses the reaction phosphoenolpyruvate + UDP-N-acetyl-alpha-D-glucosamine = UDP-N-acetyl-3-O-(1-carboxyvinyl)-alpha-D-glucosamine + phosphate. It functions in the pathway cell wall biogenesis; peptidoglycan biosynthesis. In terms of biological role, cell wall formation. Adds enolpyruvyl to UDP-N-acetylglucosamine. This is UDP-N-acetylglucosamine 1-carboxyvinyltransferase from Endomicrobium trichonymphae.